Consider the following 301-residue polypeptide: MICKTQKLNNGKEIPTVGLGTWGMEDEAVLEGAIRNALSLGYRHIDTAFIYGNEKMIGNILKKLFDEGVVQRKDLFITSKLWNTFHGCPEDGLRRSLNDLQMDYVDLYLIHWPVTFDPAPDGTVESCGKKYNVGKFDAVGVWKKMEALVDLGLAKSIGISNFGKANTEKILGTCRICPAAIQIELHPYLNQKELVEFMKSKGIQVISYSSLGSAPGSSAKVRDDKTIKAIAKKYGCAPSQIILSYITAQGICVIPKSRSKEHLRENIDLKELSREDISAIDALNTGHRYVDPPGFGPEKFK.

11 to 20 (GKEIPTVGLG) contacts NADP(+). Tyr-51 serves as the catalytic Proton donor. Residue His-111 participates in substrate binding. 209 to 266 (SSLGSAPGSSAKVRDDKTIKAIAKKYGCAPSQIILSYITAQGICVIPKSRSKEHLREN) serves as a coordination point for NADP(+).

Belongs to the aldo/keto reductase family.

Its subcellular location is the cytoplasm. It catalyses the reaction an alditol + NAD(+) = an aldose + NADH + H(+). It carries out the reaction an alditol + NADP(+) = an aldose + NADPH + H(+). In terms of biological role, catalyzes the NADPH-dependent reduction of a wide variety of carbonyl-containing compounds to their corresponding alcohols with a broad range of catalytic efficiencies. The chain is Aldose reductase from Encephalitozoon cuniculi (strain GB-M1) (Microsporidian parasite).